The chain runs to 578 residues: MASFQIPVINLEVREVKDIVWEKIQEPVNQRRLILVIVSIALLLDNMLYMVIVPIIPDYLREIGSFDDGPTPPPLRDNITGKIIPVHHDHHGQDSATGILFASKAIVQLMVNPFSGGLIDKIGYDLPMMIGLTIMFFSTAVFACGSSYSVLFFARSLQGAGSAFADTAGLAMIADRFTEENERSQALGIALAFISFGCLVAPPFGGALYQFAGKEVPFLILALVCLLDGLMLLLVMKPVKEAMKQSKDVQDQVIPIWRLLMDPYIAVCAGALTMSNVALAFLEPTISLWMEDNMTTDNWKIGMVWLPAFFPHVLGVVITVKMARKYPQHQWLMAAGGLALEGFSCFIIPFCSGYKMLMLPICVICFGIALIDTALLPTLGYLVDVRYVSVYGSIYAIADISYSIAYAVGPIIAGGVVEAIGFTALNFLIAFSNLAYVPVLRKLRNIYDFKPFENEANILMQDPPNKEYQTYVMHDQKPVEGGVKNHLEYGQQYQQEQETNLDDQQYEYQQQQQGYQQGYQQDQGYQPGYQEQGGSYAPQGQPRVANPFQQQQQQQQQQQQQVQSRGPAAPANPFRQGF.

Residues 1–32 lie on the Cytoplasmic side of the membrane; it reads MASFQIPVINLEVREVKDIVWEKIQEPVNQRR. The chain crosses the membrane as a helical span at residues 33–53; sequence LILVIVSIALLLDNMLYMVIV. The Lumenal, vesicle segment spans residues 54-98; the sequence is PIIPDYLREIGSFDDGPTPPPLRDNITGKIIPVHHDHHGQDSATG. An N-linked (GlcNAc...) asparagine glycan is attached at Asn78. Residues 99–119 form a helical membrane-spanning segment; the sequence is ILFASKAIVQLMVNPFSGGLI. Topologically, residues 120-125 are cytoplasmic; sequence DKIGYD. Residues 126-146 traverse the membrane as a helical segment; the sequence is LPMMIGLTIMFFSTAVFACGS. The Lumenal, vesicle portion of the chain corresponds to 147 to 154; sequence SYSVLFFA. The helical transmembrane segment at 155-175 threads the bilayer; sequence RSLQGAGSAFADTAGLAMIAD. Residues 176–187 lie on the Cytoplasmic side of the membrane; it reads RFTEENERSQAL. A helical membrane pass occupies residues 188 to 208; it reads GIALAFISFGCLVAPPFGGAL. The Lumenal, vesicle segment spans residues 209–215; it reads YQFAGKE. Residues 216 to 236 form a helical membrane-spanning segment; it reads VPFLILALVCLLDGLMLLLVM. Residues 237 to 263 are Cytoplasmic-facing; it reads KPVKEAMKQSKDVQDQVIPIWRLLMDP. Residues 264-284 form a helical membrane-spanning segment; the sequence is YIAVCAGALTMSNVALAFLEP. The Lumenal, vesicle portion of the chain corresponds to 285–299; the sequence is TISLWMEDNMTTDNW. N-linked (GlcNAc...) asparagine glycosylation is present at Asn293. Residues 300–320 traverse the membrane as a helical segment; sequence KIGMVWLPAFFPHVLGVVITV. The Cytoplasmic portion of the chain corresponds to 321 to 330; that stretch reads KMARKYPQHQ. The helical transmembrane segment at 331–351 threads the bilayer; sequence WLMAAGGLALEGFSCFIIPFC. Residues 352 to 355 are Lumenal, vesicle-facing; sequence SGYK. The helical transmembrane segment at 356–376 threads the bilayer; it reads MLMLPICVICFGIALIDTALL. The Cytoplasmic segment spans residues 377–387; the sequence is PTLGYLVDVRY. Residues 388-408 form a helical membrane-spanning segment; it reads VSVYGSIYAIADISYSIAYAV. The Lumenal, vesicle portion of the chain corresponds to 409–413; sequence GPIIA. Residues 414-434 traverse the membrane as a helical segment; it reads GGVVEAIGFTALNFLIAFSNL. At 435–578 the chain is on the cytoplasmic side; that stretch reads AYVPVLRKLR…APANPFRQGF (144 aa). Low complexity-rich tracts occupy residues 507-534 and 549-563; these read EYQQQQQGYQQGYQQDQGYQPGYQEQGG and QQQQQQQQQQQQQVQ. Residues 507–578 form a disordered region; it reads EYQQQQQGYQ…APANPFRQGF (72 aa).

The protein belongs to the major facilitator superfamily. Vesicular transporter family.

The protein resides in the membrane. Functionally, involved in acetylcholine transport into synaptic vesicles. In Drosophila melanogaster (Fruit fly), this protein is Vesicular acetylcholine transporter (VAChT).